A 427-amino-acid chain; its full sequence is Serine--tRNA ligase (427 aa).

Position 233–235 (233–235 (TGE)) interacts with L-serine. 264-266 (RSE) is an ATP binding site. L-serine is bound at residue E287. 351–354 (EVSS) serves as a coordination point for ATP. S387 is a binding site for L-serine.

Belongs to the class-II aminoacyl-tRNA synthetase family. Type-1 seryl-tRNA synthetase subfamily. As to quaternary structure, homodimer. The tRNA molecule binds across the dimer.

It is found in the cytoplasm. It carries out the reaction tRNA(Ser) + L-serine + ATP = L-seryl-tRNA(Ser) + AMP + diphosphate + H(+). The catalysed reaction is tRNA(Sec) + L-serine + ATP = L-seryl-tRNA(Sec) + AMP + diphosphate + H(+). It participates in aminoacyl-tRNA biosynthesis; selenocysteinyl-tRNA(Sec) biosynthesis; L-seryl-tRNA(Sec) from L-serine and tRNA(Sec): step 1/1. Functionally, catalyzes the attachment of serine to tRNA(Ser). Is also able to aminoacylate tRNA(Sec) with serine, to form the misacylated tRNA L-seryl-tRNA(Sec), which will be further converted into selenocysteinyl-tRNA(Sec). This Buchnera aphidicola subsp. Acyrthosiphon pisum (strain 5A) protein is Serine--tRNA ligase.